Here is a 612-residue protein sequence, read N- to C-terminus: MSKVIGIDLGTTNSCVAVLEGGEPKVIPNPEGARTTPSVVAFKNGERQVGEVAKRQSITNPNTIMSIKRHMGTDYTVEIEGKKYTPQEVSAIILQHLKSYAESYLGETVSKAVITVPAYFNDAERQATKDAGKIAGLEVERIINEPTAAALAYGLDKTEEDQTILVYDLGGGTFDVSILELGDGVFEVRSTAGDNRLGGDDFDQVIIDHLVSEFKKENGIDLSKDKMALQRLKDAAEKAKKDLSGVSSTQISLPFITAGEAGPLHLELTLTRAKFEELSSHLVERTMGPVRQALQDAGLSASEIDKVILVGGSTRIPAVQEAIKKETGKEAHKGVNPDEVVALGAAIQGGVITGDVKDVVLLDVTPLSLGIETMGGVFTKLIERNTTIPTSKSQVFSTAADNQTAVDIHVLQGERPMAADNKTLGRFQLTDIPPAPRGVPQIEVSFDIDKNGIVNVSAKDLGTGKEQNITIKSSSGLSDDEIERMVKEAEENAEADAKKKEEIELRNEADQLVFTTEKTLKDLEGKADEAQVKKANEAKDALKAAIEKNDLDEIKAKKDELQAIVQELSMKLYEEAAKQAQAQQDGGAGAKKADDNVVDAEYEEVNDDKDQK.

Thr173 carries the post-translational modification Phosphothreonine; by autocatalysis. Residues 576-612 (AAKQAQAQQDGGAGAKKADDNVVDAEYEEVNDDKDQK) are disordered. The span at 596–612 (NVVDAEYEEVNDDKDQK) shows a compositional bias: acidic residues.

Belongs to the heat shock protein 70 family.

Acts as a chaperone. This is Chaperone protein DnaK from Bacillus licheniformis (strain ATCC 14580 / DSM 13 / JCM 2505 / CCUG 7422 / NBRC 12200 / NCIMB 9375 / NCTC 10341 / NRRL NRS-1264 / Gibson 46).